The chain runs to 157 residues: 3-dehydroquinate dehydratase (157 aa).

Tyr22 functions as the Proton acceptor in the catalytic mechanism. The substrate site is built by Asn73, His79, and Asp86. The active-site Proton donor is the His99. Residues 100–101 (LS) and Arg110 each bind substrate.

It belongs to the type-II 3-dehydroquinase family. As to quaternary structure, homododecamer.

It carries out the reaction 3-dehydroquinate = 3-dehydroshikimate + H2O. It participates in metabolic intermediate biosynthesis; chorismate biosynthesis; chorismate from D-erythrose 4-phosphate and phosphoenolpyruvate: step 3/7. Catalyzes a trans-dehydration via an enolate intermediate. The chain is 3-dehydroquinate dehydratase from Roseiflexus castenholzii (strain DSM 13941 / HLO8).